We begin with the raw amino-acid sequence, 381 residues long: Chymosin (381 aa).

The first 16 residues, 1–16, serve as a signal peptide directing secretion; sequence MRGFVVLLAVFALSQA. The propeptide at 17–58 is activation peptide; it reads SGIVRIPLHKGKSLRRALKERGLLEDFLKNHQHAVSRKHSNS. In terms of domain architecture, Peptidase A1 spans 74–378; that stretch reads YFGKIYIGTP…DRASNLVGLA (305 aa). Asp-92 is a catalytic residue. Copy 1 of the repeat occupies 92–102; that stretch reads DTGSSDLWVPS. Intrachain disulfides connect Cys-105/Cys-110 and Cys-265/Cys-269. Residue Asp-274 is part of the active site. Repeat 2 spans residues 274 to 284; it reads DTGTSMLVGPG. Cys-308 and Cys-341 are oxidised to a cystine.

Belongs to the peptidase A1 family. As to quaternary structure, monomer.

It carries out the reaction Broad specificity similar to that of pepsin A. Clots milk by cleavage of a single 104-Ser-Phe-|-Met-Ala-107 bond in kappa-chain of casein.. With respect to regulation, inhibited by pepstatin. Hydrolyzes a variety of proteins. This is Chymosin (CYM) from Callithrix jacchus (White-tufted-ear marmoset).